The sequence spans 656 residues: Very long-chain specific acyl-CoA dehydrogenase, mitochondrial (656 aa).

The segment at 1 to 33 (MQSARMTPSVGRQLLRLGARSSRSTTVLQGQPR) is disordered. Residues 1-41 (MQSARMTPSVGRQLLRLGARSSRSTTVLQGQPRPISAQRLY) constitute a mitochondrion transit peptide. The segment at 42–483 (AREATQAVLD…ALQGCMDKGK (442 aa)) is catalytic. N6-acetyllysine is present on lysine 52. An N6-acetyllysine; alternate mark is found at lysine 72 and lysine 128. 2 positions are modified to N6-succinyllysine; alternate: lysine 72 and lysine 128. Lysine 196 carries the N6-succinyllysine modification. 215–224 (FCLTEPSSGS) is an FAD binding site. Residue cysteine 238 is modified to S-nitrosocysteine. N6-acetyllysine; alternate is present on lysine 240. The residue at position 240 (lysine 240) is an N6-succinyllysine; alternate. 250–252 (WIS) is a binding site for FAD. Lysine 269 carries the N6-succinyllysine modification. An N6-acetyllysine; alternate mark is found at lysine 277 and lysine 279. N6-succinyllysine; alternate occurs at positions 277 and 279. Residues lysine 299 and lysine 317 each carry the N6-acetyllysine modification. An N6-acetyllysine; alternate modification is found at lysine 332. Lysine 332 is modified (N6-succinyllysine; alternate). Lysine 373 carries the N6-succinyllysine modification. Substrate is bound at residue 462 to 464 (FEG). Glutamate 463 serves as the catalytic Proton acceptor. Position 465 to 467 (465 to 467 (AND)) interacts with FAD. N6-acetyllysine; alternate is present on lysine 483. Lysine 483 is modified (N6-succinyllysine; alternate). The interval 484-517 (ELTGLGNALKNPFGNVGLLMGEAGKQLRRRTGIG) is membrane-anchoring. Residues serine 518 and serine 523 each carry the phosphoserine modification. Lysine 551 bears the N6-acetyllysine mark. Lysine 557 bears the N6-acetyllysine; alternate mark. Lysine 557 is modified (N6-succinyllysine; alternate). Glutamine 563 is a binding site for FAD. Lysine 640 is subject to N6-succinyllysine.

This sequence belongs to the acyl-CoA dehydrogenase family. Homodimer. Homodimerizes after import into the mitochondrion. The cofactor is FAD. Post-translationally, S-nitrosylation at Cys-238 in liver improves catalytic efficiency.

The protein localises to the mitochondrion inner membrane. It catalyses the reaction a very-long-chain 2,3-saturated fatty acyl-CoA + oxidized [electron-transfer flavoprotein] + H(+) = a very-long-chain (2E)-enoyl-CoA + reduced [electron-transfer flavoprotein]. The catalysed reaction is dodecanoyl-CoA + oxidized [electron-transfer flavoprotein] + H(+) = (2E)-dodecenoyl-CoA + reduced [electron-transfer flavoprotein]. The enzyme catalyses tetradecanoyl-CoA + oxidized [electron-transfer flavoprotein] + H(+) = (2E)-tetradecenoyl-CoA + reduced [electron-transfer flavoprotein]. It carries out the reaction oxidized [electron-transfer flavoprotein] + hexadecanoyl-CoA + H(+) = (2E)-hexadecenoyl-CoA + reduced [electron-transfer flavoprotein]. It catalyses the reaction octadecanoyl-CoA + oxidized [electron-transfer flavoprotein] + H(+) = (2E)-octadecenoyl-CoA + reduced [electron-transfer flavoprotein]. The catalysed reaction is eicosanoyl-CoA + oxidized [electron-transfer flavoprotein] + H(+) = (2E)-eicosenoyl-CoA + reduced [electron-transfer flavoprotein]. The enzyme catalyses docosanoyl-CoA + oxidized [electron-transfer flavoprotein] + H(+) = (2E)-docosenoyl-CoA + reduced [electron-transfer flavoprotein]. It carries out the reaction tetracosanoyl-CoA + oxidized [electron-transfer flavoprotein] + H(+) = (2E)-tetracosenoyl-CoA + reduced [electron-transfer flavoprotein]. The protein operates within lipid metabolism; mitochondrial fatty acid beta-oxidation. In terms of biological role, very long-chain specific acyl-CoA dehydrogenase is one of the acyl-CoA dehydrogenases that catalyze the first step of mitochondrial fatty acid beta-oxidation, an aerobic process breaking down fatty acids into acetyl-CoA and allowing the production of energy from fats. The first step of fatty acid beta-oxidation consists in the removal of one hydrogen from C-2 and C-3 of the straight-chain fatty acyl-CoA thioester, resulting in the formation of trans-2-enoyl-CoA. Among the different mitochondrial acyl-CoA dehydrogenases, very long-chain specific acyl-CoA dehydrogenase acts specifically on acyl-CoAs with saturated 12 to 24 carbons long primary chains. The sequence is that of Very long-chain specific acyl-CoA dehydrogenase, mitochondrial from Mus musculus (Mouse).